The sequence spans 277 residues: Caspase-3 (277 aa).

Methionine 1 bears the N-acetylmethionine mark. Propeptides lie at residues 1-9 (MENNKTSVD) and 10-28 (SKSI…KSMD). N6-acetyllysine is present on lysine 11. Serine 26 carries the post-translational modification Phosphoserine. Catalysis depends on residues histidine 121 and cysteine 163. Residue cysteine 163 is modified to S-nitrosocysteine; in inhibited form.

The protein belongs to the peptidase C14A family. In terms of assembly, heterotetramer that consists of two anti-parallel arranged heterodimers, each one formed by a 17 kDa (p17) and a 12 kDa (p12) subunit. Interacts with BIRC6/bruce. (Microbial infection) Subunit p17 interacts with African swine fever virus (ASFV) inhibitor of apoptosis protein. Post-translationally, cleavage by granzyme B, caspase-6, caspase-8 and caspase-10 generates the two active subunits. Additional processing of the propeptides is likely due to the autocatalytic activity of the activated protease. Active heterodimers between the small subunit of caspase-7 protease and the large subunit of caspase-3 also occur and vice versa. S-nitrosylated on its catalytic site cysteine in unstimulated cell lines and denitrosylated upon activation of the Fas apoptotic pathway, associated with an increase in intracellular caspase activity. Fas therefore activates caspase-3 not only by inducing the cleavage of the caspase zymogen to its active subunits, but also by stimulating the denitrosylation of its active site thiol. In terms of processing, ubiquitinated by BIRC6; this activity is inhibited by DIABLO/SMAC.

The protein localises to the cytoplasm. It carries out the reaction Strict requirement for an Asp residue at positions P1 and P4. It has a preferred cleavage sequence of Asp-Xaa-Xaa-Asp-|- with a hydrophobic amino-acid residue at P2 and a hydrophilic amino-acid residue at P3, although Val or Ala are also accepted at this position.. With respect to regulation, inhibited by BIRC6; following inhibition of BIRC6-caspase binding by DIABLO/SMAC, BIRC6 is subjected to caspase cleavage, leading to an increase in active caspases. Involved in the activation cascade of caspases responsible for apoptosis execution. At the onset of apoptosis, it proteolytically cleaves poly(ADP-ribose) polymerase PARP1 at a '216-Asp-|-Gly-217' bond. Cleaves and activates sterol regulatory element binding proteins (SREBPs) between the basic helix-loop-helix leucine zipper domain and the membrane attachment domain. Cleaves and activates caspase-6, -7 and -9 (CASP6, CASP7 and CASP9, respectively). Cleaves and inactivates interleukin-18 (IL18). Triggers cell adhesion in sympathetic neurons through RET cleavage. Cleaves IL-1 beta between an Asp and an Ala, releasing the mature cytokine which is involved in a variety of inflammatory processes. Cleaves and inhibits serine/threonine-protein kinase AKT1 in response to oxidative stress. Acts as an inhibitor of type I interferon production during virus-induced apoptosis by mediating cleavage of antiviral proteins CGAS, IRF3 and MAVS, thereby preventing cytokine overproduction. Also involved in pyroptosis by mediating cleavage and activation of gasdermin-E (GSDME). Cleaves XRCC4 and phospholipid scramblase proteins XKR4, XKR8 and XKR9, leading to promote phosphatidylserine exposure on apoptotic cell surface. Cleaves BIRC6 following inhibition of BIRC6-caspase binding by DIABLO/SMAC. This is Caspase-3 (CASP3) from Sus scrofa (Pig).